A 926-amino-acid polypeptide reads, in one-letter code: Taz1-interacting factor 1 (926 aa).

2 coiled-coil regions span residues 461-496 (REAV…SHQN) and 548-671 (SFTD…LKQK). A Phosphoserine modification is found at Ser548. Position 550 is a phosphothreonine (Thr550). Ser552 bears the Phosphoserine mark.

It belongs to the ATG11 family. In terms of assembly, homodimer and potential homooligomers. Interacts with taz1.

It localises to the preautophagosomal structure membrane. It is found in the vacuole membrane. Its function is as follows. Involved in cytoplasm to vacuole transport (Cvt), pexophagy, mitophagy and nucleophagy. Recruits mitochondria for their selective degradation via autophagy (mitophagy) during starvation. Works as scaffold proteins that recruit ATG proteins to the preautophagosome (PAS), the site of vesicle/autophagosome formation. Required for atg9 anterograde transport from the mitochondria to the PAS. Required for nitrogen starvation-induced sexual development and for entering the dormant G0 state. The sequence is that of Taz1-interacting factor 1 (taf1) from Schizosaccharomyces pombe (strain 972 / ATCC 24843) (Fission yeast).